A 931-amino-acid chain; its full sequence is MLLFFALGLLIHFVFFASIFDIYFTSPLVHGMTPQFTPLPPPAKRLVLFVADGLRADTLYELDEDGNSRAPFIRNVIIHEGSWGVSHTRVPTESRPGHVALIAGFYEDVSAVAKGWKENPVEFDSLFNESKYTWSWGSPDILPMFAKGASGDHVYTYSYDAQREDFGAHDATKLDTWVFDKVKDFFDAARNNQSLFTKVNEEKVVFFLHLLGIDTNGHAHRPSSREYKDNIKKVDDGVKEIVSIFKHFYGDDGKTAFIFTSDHGMTDWGSHGAGHPSETLTPFVTWGAGIKFPQNVSAQQYDDEFLKEWRLENWKRRDVNQADIAPLMASLIGVPFPLNSVGILPVGYLNNTGLFKAESMFTNAVQILEQFKVKMTQKKEATLPFLFTPFKLLSDSQQLDILRKARSYIKQEKFDEVVSLCEELIDLALRGLSYYHTYDRLFLGINVAVGFVGWMSYTSLLIIKSHSNIPKGTRKEGKKPHCLLLYSFIATGVLVACFLMIQACPWTYYVYCLLPVPIWYAVLREHEVIQDLVESLLTFPRSHFVAYLLVFTLGIEVLVLSFFYRYMLTAGLIVFAGWPFLTQLWTRAKITFLSWAFFSLLLAVFPLMPVVGRKPNLSLVMGAGFLVLLLSLAVVTTLGKRNIKLVKGELLVLLLQMLSTVLSMYVVYSTHHSLLKKEGLPLMNQIVSWATLASSLVAPLLSSTALSQRLASILLSLMSTYLLLSTGYEALFPLVLSCLMFVWIQVEQETLQQPGVSCKQKLTSIQFTCDTDIAQFRQLCPDDIRRAFFLVFFLLTAFFGTGNIASINSFDLASVYCFLTVFSPFMMGALMMWKILIPFVLVMCAFEAVQITTQLSSKGLFLVVLIISDIMALHFFFLVKDSGSWLDIGTSISHYVIVMSMTIFLVFLNGLAQLLTTKKLQLCGKPKSHLM.

Residue M1 is a topological domain, cytoplasmic. The helical transmembrane segment at 2–22 (LLFFALGLLIHFVFFASIFDI) threads the bilayer. Residues 23–442 (YFTSPLVHGM…SYYHTYDRLF (420 aa)) are Lumenal-facing. Residues N128, N192, N295, and N350 are each glycosylated (N-linked (GlcNAc...) asparagine). The helical transmembrane segment at 443 to 463 (LGINVAVGFVGWMSYTSLLII) threads the bilayer. The Cytoplasmic segment spans residues 464 to 480 (KSHSNIPKGTRKEGKKP). The helical transmembrane segment at 481–501 (HCLLLYSFIATGVLVACFLMI) threads the bilayer. A topological domain (lumenal) is located at residue Q502. A helical transmembrane segment spans residues 503–523 (ACPWTYYVYCLLPVPIWYAVL). Residues 524–543 (REHEVIQDLVESLLTFPRSH) are Cytoplasmic-facing. Residues 544-564 (FVAYLLVFTLGIEVLVLSFFY) traverse the membrane as a helical segment. R565 is a topological domain (lumenal). A helical membrane pass occupies residues 566–586 (YMLTAGLIVFAGWPFLTQLWT). Residues 587–591 (RAKIT) lie on the Cytoplasmic side of the membrane. A helical transmembrane segment spans residues 592–612 (FLSWAFFSLLLAVFPLMPVVG). Topologically, residues 613-618 (RKPNLS) are lumenal. An N-linked (GlcNAc...) asparagine glycan is attached at N616. A helical membrane pass occupies residues 619 to 639 (LVMGAGFLVLLLSLAVVTTLG). The Cytoplasmic segment spans residues 640–649 (KRNIKLVKGE). Residues 650 to 670 (LLVLLLQMLSTVLSMYVVYST) form a helical membrane-spanning segment. Topologically, residues 671–685 (HHSLLKKEGLPLMNQ) are lumenal. A helical transmembrane segment spans residues 686–706 (IVSWATLASSLVAPLLSSTAL). The Cytoplasmic segment spans residues 707 to 723 (SQRLASILLSLMSTYLL). A helical membrane pass occupies residues 724 to 744 (LSTGYEALFPLVLSCLMFVWI). Topologically, residues 745-786 (QVEQETLQQPGVSCKQKLTSIQFTCDTDIAQFRQLCPDDIRR) are lumenal. Residues 787-807 (AFFLVFFLLTAFFGTGNIASI) form a helical membrane-spanning segment. The Cytoplasmic portion of the chain corresponds to 808-824 (NSFDLASVYCFLTVFSP). The helical transmembrane segment at 825 to 845 (FMMGALMMWKILIPFVLVMCA) threads the bilayer. The Lumenal portion of the chain corresponds to 846 to 858 (FEAVQITTQLSSK). Residues 859–879 (GLFLVVLIISDIMALHFFFLV) form a helical membrane-spanning segment. Residues 880–894 (KDSGSWLDIGTSISH) lie on the Cytoplasmic side of the membrane. A helical transmembrane segment spans residues 895-915 (YVIVMSMTIFLVFLNGLAQLL). At 916-931 (TTKKLQLCGKPKSHLM) the chain is on the lumenal side.

This sequence belongs to the PIGG/PIGN/PIGO family. PIGN subfamily.

Its subcellular location is the endoplasmic reticulum membrane. It participates in glycolipid biosynthesis; glycosylphosphatidylinositol-anchor biosynthesis. Its function is as follows. Ethanolamine phosphate transferase that catalyzes an ethanolamine phosphate (EtNP) transfer from phosphatidylethanolamine (PE) to the 2-OH position of the first alpha-1,4-linked mannose of the alpha-D-Man-(1-&gt;6)-alpha-D-Man-(1-&gt;4)-alpha-D-GlcN-(1-&gt;6)-(1-radyl,2-acyl-sn-glycero-3-phospho)-2-acyl-inositol (also termed H3) intermediate to generate an alpha-D-Man-(1-&gt;6)-2-PEtn-alpha-D-Man-(1-&gt;4)-alpha-D-GlcN-(1-&gt;6)-(1-radyl,2-acyl-sn-glycero-3-phospho)-2-acyl-inositol and participates in the eighth step of the glycosylphosphatidylinositol-anchor biosynthesis. May act as suppressor of replication stress and chromosome missegregation. The polypeptide is GPI ethanolamine phosphate transferase 1 (Mus musculus (Mouse)).